Here is a 208-residue protein sequence, read N- to C-terminus: Methylthioribulose-1-phosphate dehydratase (208 aa).

The Zn(2+) site is built by His-101 and His-103.

The protein belongs to the aldolase class II family. MtnB subfamily. Zn(2+) serves as cofactor.

The enzyme catalyses 5-(methylsulfanyl)-D-ribulose 1-phosphate = 5-methylsulfanyl-2,3-dioxopentyl phosphate + H2O. It participates in amino-acid biosynthesis; L-methionine biosynthesis via salvage pathway; L-methionine from S-methyl-5-thio-alpha-D-ribose 1-phosphate: step 2/6. Catalyzes the dehydration of methylthioribulose-1-phosphate (MTRu-1-P) into 2,3-diketo-5-methylthiopentyl-1-phosphate (DK-MTP-1-P). The protein is Methylthioribulose-1-phosphate dehydratase of Gluconobacter oxydans (strain 621H) (Gluconobacter suboxydans).